Here is a 396-residue protein sequence, read N- to C-terminus: Vitamin K-dependent protein Z (396 aa).

Residues alanine 1 to methionine 46 enclose the Gla domain. Residues glutamate 7, glutamate 8, glutamate 11, glutamate 15, glutamate 17, glutamate 20, glutamate 21, glutamate 26, glutamate 27, glutamate 30, glutamate 33, glutamate 36, and glutamate 40 each carry the 4-carboxyglutamate modification. Residues cysteine 18 and cysteine 23 are joined by a disulfide bond. EGF-like domains lie at glycine 47–alanine 83 and alanine 85–leucine 126. 7 disulfide bridges follow: cysteine 51-cysteine 62, cysteine 56-cysteine 71, cysteine 73-cysteine 82, cysteine 89-cysteine 101, cysteine 97-cysteine 110, cysteine 112-cysteine 125, and cysteine 169-cysteine 185. A glycan (O-linked (Glc...) serine) is linked at serine 53. A glycan (N-linked (GlcNAc...) asparagine) is linked at asparagine 59. Aspartate 64 carries the post-translational modification (3R)-3-hydroxyaspartate. Positions threonine 135–glutamine 357 constitute a Peptidase S1 domain. N-linked (GlcNAc...) asparagine glycosylation is found at asparagine 191 and asparagine 289. Residues cysteine 284 and cysteine 298 are joined by a disulfide bond. The tract at residues threonine 356–valine 396 is disordered. The span at proline 364 to glutamate 375 shows a compositional bias: basic and acidic residues. An O-linked (GalNAc...) threonine glycan is attached at threonine 388.

Belongs to the peptidase S1 family. Post-translationally, the iron and 2-oxoglutarate dependent 3-hydroxylation of aspartate and asparagine is (R) stereospecific within EGF domains. As to expression, plasma.

It localises to the secreted. In terms of biological role, inhibits activity of the coagulation protease factor Xa in the presence of SERPINA10, calcium and phospholipids. Appears to assist hemostasis by binding thrombin and promoting its association with phospholipid vesicles. The chain is Vitamin K-dependent protein Z (PROZ) from Bos taurus (Bovine).